The following is a 467-amino-acid chain: MRPQELPRLAFPLLLLLLLLLPPPPCPAHSATRFDPTWESLDARQLPAWFDQAKFGIFIHWGVFSVPSFGSEWFWWYWQKEKIPKYVEFMKDNYPPSFKYEDFGPLFTAKFFNANQWADIFQASGAKYIVLTSKHHEGFTLWGSEYSWNWNAIDEGPKRDIVKELEVAIRNRTDLRFGLYYSLFEWFHPLFLEDESSSFHKRQFPVSKTLPELYELVNNYQPEVLWSDGDGGAPDQYWNSTGFLAWLYNESPVRGTVVTNDRWGAGSICKHGGFYTCSDRYNPGHLLPHKWENCMTIDKLSWGYRREAGISDYLTIEELVKQLVETVSCGGNLLMNIGPTLDGTISVVFEERLRQMGSWLKVNGEAIYETHTWRSQNDTVTPDVWYTSKPKEKLVYAIFLKWPTSGQLFLGHPKAILGATEVKLLGHGQPLNWISLEQNGIMVELPQLTIHQMPCKWGWALALTNVI.

The first 28 residues, 1–28 (MRPQELPRLAFPLLLLLLLLLPPPPCPA), serve as a signal peptide directing secretion. N171 and N239 each carry an N-linked (GlcNAc...) asparagine glycan. S301 is modified (phosphoserine; by FAM20C). A glycan (N-linked (GlcNAc...) asparagine) is linked at N377.

It belongs to the glycosyl hydrolase 29 family. Homotetramer.

It is found in the secreted. It carries out the reaction an alpha-L-fucoside + H2O = L-fucose + an alcohol. Its function is as follows. Alpha-L-fucosidase is responsible for hydrolyzing the alpha-1,6-linked fucose joined to the reducing-end N-acetylglucosamine of the carbohydrate moieties of glycoproteins. This chain is Plasma alpha-L-fucosidase (FUCA2), found in Homo sapiens (Human).